The primary structure comprises 173 residues: Ribosome maturation factor RimM (173 aa).

A PRC barrel domain is found at 97 to 170 (EHEYYYHEII…RIRVHIMEGL (74 aa)).

The protein belongs to the RimM family. Binds ribosomal protein uS19.

It is found in the cytoplasm. Functionally, an accessory protein needed during the final step in the assembly of 30S ribosomal subunit, possibly for assembly of the head region. Essential for efficient processing of 16S rRNA. May be needed both before and after RbfA during the maturation of 16S rRNA. It has affinity for free ribosomal 30S subunits but not for 70S ribosomes. The chain is Ribosome maturation factor RimM from Shouchella clausii (strain KSM-K16) (Alkalihalobacillus clausii).